Consider the following 648-residue polypeptide: Phosphomethylpyrimidine synthase (648 aa).

Substrate is bound by residues Asn-253, Met-282, Tyr-311, His-347, 367–369, 408–411, and Glu-447; these read SRG and DGLR. His-451 lines the Zn(2+) pocket. Tyr-474 is a substrate binding site. His-515 contributes to the Zn(2+) binding site. Cys-595, Cys-598, and Cys-603 together coordinate [4Fe-4S] cluster.

The protein belongs to the ThiC family. Homodimer. It depends on [4Fe-4S] cluster as a cofactor.

The catalysed reaction is 5-amino-1-(5-phospho-beta-D-ribosyl)imidazole + S-adenosyl-L-methionine = 4-amino-2-methyl-5-(phosphooxymethyl)pyrimidine + CO + 5'-deoxyadenosine + formate + L-methionine + 3 H(+). Its pathway is cofactor biosynthesis; thiamine diphosphate biosynthesis. Functionally, catalyzes the synthesis of the hydroxymethylpyrimidine phosphate (HMP-P) moiety of thiamine from aminoimidazole ribotide (AIR) in a radical S-adenosyl-L-methionine (SAM)-dependent reaction. In Burkholderia thailandensis (strain ATCC 700388 / DSM 13276 / CCUG 48851 / CIP 106301 / E264), this protein is Phosphomethylpyrimidine synthase.